The chain runs to 441 residues: Ribulose bisphosphate carboxylase large chain (441 aa).

K5 bears the N6,N6,N6-trimethyllysine mark. Substrate-binding residues include N114 and T164. The active-site Proton acceptor is K166. A substrate-binding site is contributed by K168. K192, D194, and E195 together coordinate Mg(2+). The residue at position 192 (K192) is an N6-carboxylysine. Residue H285 is the Proton acceptor of the active site. Substrate-binding residues include R286, H318, and S370.

It belongs to the RuBisCO large chain family. Type I subfamily. As to quaternary structure, heterohexadecamer of 8 large chains and 8 small chains; disulfide-linked. The disulfide link is formed within the large subunit homodimers. Mg(2+) is required as a cofactor. The disulfide bond which can form in the large chain dimeric partners within the hexadecamer appears to be associated with oxidative stress and protein turnover.

It is found in the plastid. Its subcellular location is the chloroplast. It catalyses the reaction 2 (2R)-3-phosphoglycerate + 2 H(+) = D-ribulose 1,5-bisphosphate + CO2 + H2O. It carries out the reaction D-ribulose 1,5-bisphosphate + O2 = 2-phosphoglycolate + (2R)-3-phosphoglycerate + 2 H(+). RuBisCO catalyzes two reactions: the carboxylation of D-ribulose 1,5-bisphosphate, the primary event in carbon dioxide fixation, as well as the oxidative fragmentation of the pentose substrate in the photorespiration process. Both reactions occur simultaneously and in competition at the same active site. The polypeptide is Ribulose bisphosphate carboxylase large chain (Pellaea andromedifolia (Coffee fern)).